A 298-amino-acid polypeptide reads, in one-letter code: 4-hydroxybenzoate octaprenyltransferase (298 aa).

7 helical membrane passes run 30–50 (IGTW…AEGI), 54–74 (GTLL…CVVN), 105–125 (VLFA…NLPT), 148–168 (FPQV…FMAI), 218–238 (DRLM…WVGL), 240–260 (LALG…FVFQ), and 275–295 (AFLN…LSLW).

Belongs to the UbiA prenyltransferase family. The cofactor is Mg(2+).

The protein localises to the cell inner membrane. The catalysed reaction is all-trans-octaprenyl diphosphate + 4-hydroxybenzoate = 4-hydroxy-3-(all-trans-octaprenyl)benzoate + diphosphate. It functions in the pathway cofactor biosynthesis; ubiquinone biosynthesis. In terms of biological role, catalyzes the prenylation of para-hydroxybenzoate (PHB) with an all-trans polyprenyl group. Mediates the second step in the final reaction sequence of ubiquinone-8 (UQ-8) biosynthesis, which is the condensation of the polyisoprenoid side chain with PHB, generating the first membrane-bound Q intermediate 3-octaprenyl-4-hydroxybenzoate. This is 4-hydroxybenzoate octaprenyltransferase from Chromohalobacter salexigens (strain ATCC BAA-138 / DSM 3043 / CIP 106854 / NCIMB 13768 / 1H11).